The following is a 711-amino-acid chain: GDNF-inducible zinc finger protein 1 (711 aa).

The 73-residue stretch at C31–E103 folds into the BTB domain. Low complexity predominate over residues S153–A168. 2 disordered regions span residues S153–R220 and R243–K312. 3 stretches are compositionally biased toward basic and acidic residues: residues P197–V212, R243–E252, and S265–S277. Residues E298 to E309 are compositionally biased toward acidic residues. C2H2-type zinc fingers lie at residues F317–H340, Y348–H371, F377–H400, H407–H429, Y435–H457, F463–H485, F491–H513, F519–H541, Y547–H569, and F575–H597. S613 carries the phosphoserine modification.

This sequence belongs to the krueppel C2H2-type zinc-finger protein family. As to quaternary structure, interacts with NCL. Expressed in adult brain, heart, skeletal muscle, kidney and liver. Also detected in fetal brain and kidney, and at lower levels in fetal lung and liver.

It is found in the cytoplasm. The protein resides in the nucleus. It localises to the nucleoplasm. Its subcellular location is the nucleolus. In terms of biological role, transcriptional repressor that binds the GZF1 responsive element (GRE) (consensus: 5'-TGCGCN[TG][CA]TATA-3'). May be regulating VSX2/HOX10 expression. In Homo sapiens (Human), this protein is GDNF-inducible zinc finger protein 1.